The primary structure comprises 315 residues: Methionyl-tRNA formyltransferase (315 aa).

Position 115–118 (115–118 (SLLP)) interacts with (6S)-5,6,7,8-tetrahydrofolate.

It belongs to the Fmt family.

It catalyses the reaction L-methionyl-tRNA(fMet) + (6R)-10-formyltetrahydrofolate = N-formyl-L-methionyl-tRNA(fMet) + (6S)-5,6,7,8-tetrahydrofolate + H(+). Its function is as follows. Attaches a formyl group to the free amino group of methionyl-tRNA(fMet). The formyl group appears to play a dual role in the initiator identity of N-formylmethionyl-tRNA by promoting its recognition by IF2 and preventing the misappropriation of this tRNA by the elongation apparatus. The protein is Methionyl-tRNA formyltransferase of Dehalococcoides mccartyi (strain ATCC BAA-2100 / JCM 16839 / KCTC 5957 / BAV1).